Reading from the N-terminus, the 877-residue chain is Protein P (877 aa).

Residues 1-183 (MHPFSQLFRN…GKPYSWGHRQ (183 aa)) form a terminal protein domain (TP) region. Residues 184–382 (LEQHNGQQHE…YCLHHIVSSL (199 aa)) form a spacer region. A compositionally biased stretch (basic and acidic residues) spans 185-198 (EQHNGQQHESHLQS). The disordered stretch occupies residues 185–347 (EQHNGQQHES…PSSSGLCGGT (163 aa)). A compositionally biased stretch (polar residues) spans 233-242 (FGESQKSART). The span at 267 to 281 (QQGSSQVSSPRSKSS) shows a compositional bias: low complexity. Polar residues-rich tracts occupy residues 282 to 302 (NFRN…PTWY) and 338 to 347 (PSSSGLCGGT). Positions 383-723 (EDWGPCTISG…YAELWPVARQ (341 aa)) are polymerase/reverse transcriptase domain (RT). A Reverse transcriptase domain is found at 393-634 (DVTIRSPRTP…HHLHFMGYVI (242 aa)). Residues aspartate 465, aspartate 585, and aspartate 586 each contribute to the Mg(2+) site.

Belongs to the hepadnaviridae P protein family.

The enzyme catalyses DNA(n) + a 2'-deoxyribonucleoside 5'-triphosphate = DNA(n+1) + diphosphate. The catalysed reaction is Endonucleolytic cleavage to 5'-phosphomonoester.. With respect to regulation, activated by host HSP70 and HSP40 in vitro to be able to bind the epsilon loop of the pgRNA. Because deletion of the RNase H region renders the protein partly chaperone-independent, the chaperones may be needed indirectly to relieve occlusion of the RNA-binding site by this domain. Inhibited by several reverse-transcriptase inhibitors: Lamivudine, Adefovir and Entecavir. Functionally, multifunctional enzyme that converts the viral RNA genome into dsDNA in viral cytoplasmic capsids. This enzyme displays a DNA polymerase activity that can copy either DNA or RNA templates, and a ribonuclease H (RNase H) activity that cleaves the RNA strand of RNA-DNA heteroduplexes in a partially processive 3'- to 5'-endonucleasic mode. Neo-synthesized pregenomic RNA (pgRNA) are encapsidated together with the P protein, and reverse-transcribed inside the nucleocapsid. Initiation of reverse-transcription occurs first by binding the epsilon loop on the pgRNA genome, and is initiated by protein priming, thereby the 5'-end of (-)DNA is covalently linked to P protein. Partial (+)DNA is synthesized from the (-)DNA template and generates the relaxed circular DNA (RC-DNA) genome. After budding and infection, the RC-DNA migrates in the nucleus, and is converted into a plasmid-like covalently closed circular DNA (cccDNA). The activity of P protein does not seem to be necessary for cccDNA generation, and is presumably released from (+)DNA by host nuclear DNA repair machinery. This Arctic squirrel hepatitis virus (ASHV) protein is Protein P.